The primary structure comprises 326 residues: Flotillin-like protein FloA (326 aa).

Residues 3–23 (FTTIVVILLVIACIVVLFFIG) traverse the membrane as a helical segment.

Belongs to the flotillin-like FloA family. As to quaternary structure, homooligomerizes.

It localises to the cell membrane. It is found in the membrane raft. Its function is as follows. Found in functional membrane microdomains (FMM) that may be equivalent to eukaryotic membrane rafts. FMMs are highly dynamic and increase in number as cells age. Flotillins are thought to be important factors in membrane fluidity. The polypeptide is Flotillin-like protein FloA (Desulforapulum autotrophicum (strain ATCC 43914 / DSM 3382 / VKM B-1955 / HRM2) (Desulfobacterium autotrophicum)).